Here is a 63-residue protein sequence, read N- to C-terminus: Period circadian protein (63 aa).

Residues 1 to 63 (EGSGGSGSSG…VTLTESLLNK (63 aa)) form a disordered region. Low complexity-rich tracts occupy residues 9-31 (SGNF…NAGT) and 39-49 (SAAASGASVNA). Residues 54–63 (VTLTESLLNK) show a composition bias toward polar residues.

In terms of assembly, forms a heterodimer with timeless (TIM); the complex then translocates into the nucleus. Post-translationally, phosphorylated with a circadian rhythmicity, probably by the double-time protein (dbt). Phosphorylation could be implicated in the stability of per monomer and in the formation of heterodimer per-tim.

It localises to the nucleus. Its subcellular location is the cytoplasm. It is found in the perinuclear region. In terms of biological role, essential for biological clock functions. Determines the period length of circadian and ultradian rhythms; an increase in PER dosage leads to shortened circadian rhythms and a decrease leads to lengthened circadian rhythms. Essential for the circadian rhythmicity of locomotor activity, eclosion behavior, and for the rhythmic component of the male courtship song that originates in the thoracic nervous system. The biological cycle depends on the rhythmic formation and nuclear localization of the TIM-PER complex. Light induces the degradation of TIM, which promotes elimination of PER. Nuclear activity of the heterodimer coordinatively regulates PER and TIM transcription through a negative feedback loop. Behaves as a negative element in circadian transcriptional loop. Does not appear to bind DNA, suggesting indirect transcriptional inhibition. The polypeptide is Period circadian protein (per) (Drosophila immigrans (Fruit fly)).